Reading from the N-terminus, the 304-residue chain is N-acetyl-D-glucosamine kinase (304 aa).

Residues 4–11 (GFDMGGTK) and 133–140 (GVGGGLIV) each bind ATP. Zn(2+) is bound by residues His157, Cys177, Cys179, and Cys184.

Belongs to the ROK (NagC/XylR) family. NagK subfamily.

It catalyses the reaction N-acetyl-D-glucosamine + ATP = N-acetyl-D-glucosamine 6-phosphate + ADP + H(+). It participates in cell wall biogenesis; peptidoglycan recycling. Its function is as follows. Catalyzes the phosphorylation of N-acetyl-D-glucosamine (GlcNAc) derived from cell-wall degradation, yielding GlcNAc-6-P. This Yersinia pseudotuberculosis serotype O:1b (strain IP 31758) protein is N-acetyl-D-glucosamine kinase.